The primary structure comprises 97 residues: Exodeoxyribonuclease 7 small subunit (97 aa).

The tract at residues 64–97 (NGQLHPAEEKGDDVSNNGVQNQGYKSQFLDGDVF) is disordered. Residues 77–88 (VSNNGVQNQGYK) show a composition bias toward polar residues.

This sequence belongs to the XseB family. In terms of assembly, heterooligomer composed of large and small subunits.

The protein localises to the cytoplasm. It carries out the reaction Exonucleolytic cleavage in either 5'- to 3'- or 3'- to 5'-direction to yield nucleoside 5'-phosphates.. Bidirectionally degrades single-stranded DNA into large acid-insoluble oligonucleotides, which are then degraded further into small acid-soluble oligonucleotides. The protein is Exodeoxyribonuclease 7 small subunit of Limosilactobacillus fermentum (strain NBRC 3956 / LMG 18251) (Lactobacillus fermentum).